A 538-amino-acid chain; its full sequence is Calcium-dependent protein kinase 8 (538 aa).

A disordered region spans residues 1–26 (MGNCCGTPATAEEGGKRRRRGKQKKA). A lipid anchor (N-myristoyl glycine) is attached at Gly-2. Positions 16–25 (KRRRRGKQKK) are enriched in basic residues. The region spanning 64–322 (YELGGELGRG…AEQVLEHPWL (259 aa)) is the Protein kinase domain. ATP is bound by residues 70–78 (LGRGEFGIT) and Lys-93. Asp-188 functions as the Proton acceptor in the catalytic mechanism. Residues 328–358 (MPDIPLGDAVRARLQQFAAMNKLKKKALKVI) are autoinhibitory domain. EF-hand domains lie at 365 to 400 (EEAA…LGNQ), 401 to 436 (MPDS…VRKI), 437 to 472 (GNDE…EIDG), and 473 to 508 (NDED…GTDW). Residues Asp-378, Ser-380, Asn-382, Gln-384, Asp-389, Asp-414, Asp-416, Asn-418, Glu-425, Asp-450, Asn-452, Ser-454, Tyr-456, Glu-461, Asp-486, Asp-488, Asp-490, Lys-492, and Glu-497 each coordinate Ca(2+).

Belongs to the protein kinase superfamily. Ser/Thr protein kinase family. CDPK subfamily.

The protein localises to the membrane. It carries out the reaction L-seryl-[protein] + ATP = O-phospho-L-seryl-[protein] + ADP + H(+). It catalyses the reaction L-threonyl-[protein] + ATP = O-phospho-L-threonyl-[protein] + ADP + H(+). Its activity is regulated as follows. Activated by calcium. Autophosphorylation may play an important role in the regulation of the kinase activity. In terms of biological role, may play a role in signal transduction pathways that involve calcium as a second messenger. In Oryza sativa subsp. japonica (Rice), this protein is Calcium-dependent protein kinase 8.